The primary structure comprises 1227 residues: ATP-dependent helicase/nuclease subunit A (1227 aa).

The region spanning 3–477 is the UvrD-like helicase ATP-binding domain; it reads VKYTPDQARA…IIFAENFRSS (475 aa). 24 to 31 provides a ligand contact to ATP; it reads ASAGSGKT. Positions 505–788 constitute a UvrD-like helicase C-terminal domain; the sequence is GQLKFAAGYD…KLMTIHASKG (284 aa).

It belongs to the helicase family. AddA subfamily. Heterodimer of AddA and AddB/RexB. It depends on Mg(2+) as a cofactor.

The catalysed reaction is Couples ATP hydrolysis with the unwinding of duplex DNA by translocating in the 3'-5' direction.. It catalyses the reaction ATP + H2O = ADP + phosphate + H(+). Functionally, the heterodimer acts as both an ATP-dependent DNA helicase and an ATP-dependent, dual-direction single-stranded exonuclease. Recognizes the chi site generating a DNA molecule suitable for the initiation of homologous recombination. The AddA nuclease domain is required for chi fragment generation; this subunit has the helicase and 3' -&gt; 5' nuclease activities. The polypeptide is ATP-dependent helicase/nuclease subunit A (Lactobacillus delbrueckii subsp. bulgaricus (strain ATCC 11842 / DSM 20081 / BCRC 10696 / JCM 1002 / NBRC 13953 / NCIMB 11778 / NCTC 12712 / WDCM 00102 / Lb 14)).